The following is a 284-amino-acid chain: MTAKLIDGKTIAANIRQQISGRVAERRAQGLRAPGLAVILVGSDPASQVYVAHKRKDCEEVGFNSVAHDLPSDTRQEDLLALIDQLNDDASIDGILVQLPLPKHLDASQLFERIRPDKDVDGFHPYNVGRLAQRMPLLRPCTPKGIMTLLESTGVDLHGLDAVVVGASNIVGRPMALELLLAGCTTTVTHRFTRNLAEHVRRADLVVVATGITGLVKGEWIKPGAIVIDVGINRQTDGRLLGDVEFEPASERAAWITPVPGGVGPMTRACLLENTLYAAEHLHD.

Residues 166 to 168 (GAS) and Ile232 each bind NADP(+).

The protein belongs to the tetrahydrofolate dehydrogenase/cyclohydrolase family. In terms of assembly, homodimer.

It carries out the reaction (6R)-5,10-methylene-5,6,7,8-tetrahydrofolate + NADP(+) = (6R)-5,10-methenyltetrahydrofolate + NADPH. The catalysed reaction is (6R)-5,10-methenyltetrahydrofolate + H2O = (6R)-10-formyltetrahydrofolate + H(+). The protein operates within one-carbon metabolism; tetrahydrofolate interconversion. Functionally, catalyzes the oxidation of 5,10-methylenetetrahydrofolate to 5,10-methenyltetrahydrofolate and then the hydrolysis of 5,10-methenyltetrahydrofolate to 10-formyltetrahydrofolate. In Stutzerimonas stutzeri (strain A1501) (Pseudomonas stutzeri), this protein is Bifunctional protein FolD.